We begin with the raw amino-acid sequence, 270 residues long: 3-phenylpropionate-dihydrodiol/cinnamic acid-dihydrodiol dehydrogenase (270 aa).

An NAD(+)-binding site is contributed by 10 to 34 (FITGGGSGLGLALVERFIEEGAQVA). Ser-143 serves as a coordination point for substrate. Tyr-156 (proton acceptor) is an active-site residue.

Belongs to the short-chain dehydrogenases/reductases (SDR) family.

It catalyses the reaction 3-(cis-5,6-dihydroxycyclohexa-1,3-dien-1-yl)propanoate + NAD(+) = 3-(2,3-dihydroxyphenyl)propanoate + NADH + H(+). The catalysed reaction is (2E)-3-(cis-5,6-dihydroxycyclohexa-1,3-dien-1-yl)prop-2-enoate + NAD(+) = (2E)-3-(2,3-dihydroxyphenyl)prop-2-enoate + NADH + H(+). Its pathway is aromatic compound metabolism; 3-phenylpropanoate degradation. Its function is as follows. Converts 3-phenylpropionate-dihydrodiol (PP-dihydrodiol) and cinnamic acid-dihydrodiol (CI-dihydrodiol) into 3-(2,3-dihydroxylphenyl)propanoic acid (DHPP) and 2,3-dihydroxicinnamic acid (DHCI), respectively. The polypeptide is 3-phenylpropionate-dihydrodiol/cinnamic acid-dihydrodiol dehydrogenase (Escherichia coli O17:K52:H18 (strain UMN026 / ExPEC)).